The following is a 352-amino-acid chain: MSFIEKVRKLRGAAATMPRRLAIAAVGASLLSGVAVAAGGSPVAGAFSKPGLPVEYLEVPSPSMGRNIKVQFQGGGPHAVYLLDGLRAQDDYNGWDINTPAFEEFYQSGLSVIMPVGGQSSFYSNWYQPSSGNGQNYTYKWETFLTQEMPLWMQSNKQVSPAGNAAVGLSMSGGSALILAAYYPQQFPYAASLSGFLNPSEGWWPTLIGLAMNDSGGYNANSMWGPSTDPAWKRNDPMVQIPRLVANNTRIWVYCGNGTPSDLGGDNVPAKFLEGLTLRTNEQFQNNYAAAGGRNGVFNFPANGTHSWPYWNQQLMAMKPDMQQVLLSGNTTAAPAQPAQPAQPAQPAQPAT.

The first 37 residues, 1 to 37, serve as a signal peptide directing secretion; the sequence is MSFIEKVRKLRGAAATMPRRLAIAAVGASLLSGVAVA. 86 to 87 serves as a coordination point for substrate; that stretch reads LR. The segment at 102–112 is fibronectin-binding; it reads FEEFYQSGLSV. Substrate-binding residues include Ser-170 and Asn-198. Ser-170 serves as the catalytic Nucleophile. Glu-274 is a catalytic residue. Substrate-binding positions include 276-279 and 306-308; these read LTLR and HSW. His-306 is an active-site residue. A disordered region spans residues 332–352; the sequence is TAAPAQPAQPAQPAQPAQPAT. The span at 333–352 shows a compositional bias: low complexity; that stretch reads AAPAQPAQPAQPAQPAQPAT.

This sequence belongs to the mycobacterial A85 antigen family. As to quaternary structure, homodimer.

The protein localises to the secreted. It catalyses the reaction an acyl-CoA + a 1,2-diacyl-sn-glycerol = a triacyl-sn-glycerol + CoA. The catalysed reaction is 2 alpha,alpha'-trehalose 6-mycolate = alpha,alpha'-trehalose 6,6'-bismycolate + alpha,alpha-trehalose. The antigen 85 proteins (FbpA, FbpB, FbpC) are responsible for the high affinity of mycobacteria to fibronectin, a large adhesive glycoprotein, which facilitates the attachment of M.tuberculosis to murine alveolar macrophages (AMs). They also help to maintain the integrity of the cell wall by catalyzing the transfer of mycolic acids to cell wall arabinogalactan and through the synthesis of alpha,alpha-trehalose dimycolate (TDM, cord factor). They catalyze the transfer of a mycoloyl residue from one molecule of alpha,alpha-trehalose monomycolate (TMM) to another TMM, leading to the formation of TDM. This chain is Diacylglycerol acyltransferase/mycolyltransferase Ag85C (fbpC), found in Mycobacterium avium.